The following is a 624-amino-acid chain: LRR receptor kinase BAK1 (624 aa).

The first 25 residues, 1–25 (MAAPRWAVWAVLLLRLLVPAARVLA), serve as a signal peptide directing secretion. Topologically, residues 26 to 237 (NMEGDALHSL…QSPGSSSSTG (212 aa)) are extracellular. LRR repeat units follow at residues 91–115 (LKNLQYLELYSNNISGTIPSELGNL), 117–139 (NLVSLDLYLNNFTGPIPDSLGNL), 140–163 (LKLRFLRLNNNSLSGSIPKSLTAI), and 164–188 (TALQVLDLSNNNLSGEVPSTGSFSL). N-linked (GlcNAc...) asparagine glycans are attached at residues Asn-103, Asn-114, Asn-127, Asn-149, and Asn-175. Positions 205–236 (TTKPCPGAPPFSPPPPYNPPTPVQSPGSSSST) are disordered. Pro residues predominate over residues 210-227 (PGAPPFSPPPPYNPPTPV). Residues 238-258 (AIAGGVAAGAALLFAIPAIGF) form a helical membrane-spanning segment. Over 259-624 (AWYRRRKPQE…LHAVELSGPR (366 aa)) the chain is Cytoplasmic. The Protein kinase domain occupies 301 to 588 (FSNKNILGRG…GLAERWEEWQ (288 aa)). ATP contacts are provided by residues 307–315 (LGRGGFGKV) and Lys-329. Catalysis depends on Asp-428, which acts as the Proton acceptor.

This sequence belongs to the protein kinase superfamily. Ser/Thr protein kinase family. In terms of assembly, forms homodimers. Interacts with BRI1. Interacts with REM4.1.

It is found in the cell membrane. The enzyme catalyses L-seryl-[protein] + ATP = O-phospho-L-seryl-[protein] + ADP + H(+). It carries out the reaction L-threonyl-[protein] + ATP = O-phospho-L-threonyl-[protein] + ADP + H(+). Its function is as follows. LRR receptor kinase involved in defense response. Does not seem to be required specifically for XA21-mediated immunity or basal resistance to Xanthomonas oryzae pv. oryzae (Xoo), or immunity to Magnaporthe oryzae. Involved in brassinosteroid (BR) signaling pathway. Acts as a coreceptor of BRI1. Forms at the plasma membrane a receptor complex with BRI1 which is activated in response to brassinolide. Phosphorylates BRI1. Required for normal plant growth and leaf development. Possesses kinase activity in vitro. This Oryza sativa subsp. indica (Rice) protein is LRR receptor kinase BAK1.